Consider the following 155-residue polypeptide: Interleukin-2 (155 aa).

The signal sequence occupies residues Met1–Gly20. O-linked (GalNAc...) threonine glycosylation is present at Thr23. Cys79 and Cys127 are joined by a disulfide.

Belongs to the IL-2 family.

The protein localises to the secreted. Its function is as follows. Cytokine produced by activated CD4-positive helper T-cells and to a lesser extend activated CD8-positive T-cells and natural killer (NK) cells that plays pivotal roles in the immune response and tolerance. Binds to a receptor complex composed of either the high-affinity trimeric IL-2R (IL2RA/CD25, IL2RB/CD122 and IL2RG/CD132) or the low-affinity dimeric IL-2R (IL2RB and IL2RG). Interaction with the receptor leads to oligomerization and conformation changes in the IL-2R subunits resulting in downstream signaling starting with phosphorylation of JAK1 and JAK3. In turn, JAK1 and JAK3 phosphorylate the receptor to form a docking site leading to the phosphorylation of several substrates including STAT5. This process leads to activation of several pathways including STAT, phosphoinositide-3-kinase/PI3K and mitogen-activated protein kinase/MAPK pathways. Functions as a T-cell growth factor and can increase NK-cell cytolytic activity as well. Promotes strong proliferation of activated B-cells and subsequently immunoglobulin production. Plays a pivotal role in regulating the adaptive immune system by controlling the survival and proliferation of regulatory T-cells, which are required for the maintenance of immune tolerance. Moreover, participates in the differentiation and homeostasis of effector T-cell subsets, including Th1, Th2, Th17 as well as memory CD8-positive T-cells. In Boselaphus tragocamelus (Nilgai), this protein is Interleukin-2 (IL2).